Here is a 46-residue protein sequence, read N- to C-terminus: Protein PsbN (46 aa).

A helical membrane pass occupies residues 7 to 27 (ALSVALGVMAVVLGLTGFGVY).

The protein belongs to the PsbN family.

Its subcellular location is the cellular thylakoid membrane. Its function is as follows. May play a role in photosystem I and II biogenesis. The protein is Protein PsbN of Synechococcus sp. (strain CC9902).